The following is a 65-amino-acid chain: Large ribosomal subunit protein bL35 (65 aa).

The protein belongs to the bacterial ribosomal protein bL35 family.

In Chromobacterium violaceum (strain ATCC 12472 / DSM 30191 / JCM 1249 / CCUG 213 / NBRC 12614 / NCIMB 9131 / NCTC 9757 / MK), this protein is Large ribosomal subunit protein bL35.